Reading from the N-terminus, the 612-residue chain is Chaperone protein DnaK (612 aa).

Residue threonine 174 is modified to Phosphothreonine; by autocatalysis. The interval 578–612 (GGQTGGATNTDSAGQGTTQDNVYEANYKVEDDDNK) is disordered. Over residues 586–598 (NTDSAGQGTTQDN) the composition is skewed to polar residues.

This sequence belongs to the heat shock protein 70 family.

Functionally, acts as a chaperone. This Thermoanaerobacter sp. (strain X514) protein is Chaperone protein DnaK.